A 262-amino-acid polypeptide reads, in one-letter code: Type II restriction enzyme MspI (262 aa).

The enzyme catalyses Endonucleolytic cleavage of DNA to give specific double-stranded fragments with terminal 5'-phosphates.. Its function is as follows. A P subtype restriction enzyme that recognizes the double-stranded sequence 5'-CCGG-3' and cleaves after C-1. The polypeptide is Type II restriction enzyme MspI (mspIR) (Moraxella sp).